We begin with the raw amino-acid sequence, 467 residues long: Glutamine synthetase (467 aa).

The GS beta-grasp domain maps to 14-98; that stretch reads EEVEYVDIRF…VHCNVVEPDT (85 aa). In terms of domain architecture, GS catalytic spans 106–467; that stretch reads PRGAAVKAEA…PVEYQMYYSC (362 aa). Mg(2+) contacts are provided by glutamate 131 and glutamate 133. ATP is bound at residue aspartate 209. The Mg(2+) site is built by glutamate 214 and glutamate 221. L-glutamate-binding positions include 265 to 266 and glycine 266; that span reads NG. Residue histidine 270 coordinates Mg(2+). ATP is bound by residues 272-274 and serine 274; that span reads NMS. 3 residues coordinate L-glutamate: arginine 320, glutamate 326, and arginine 338. ATP contacts are provided by arginine 338 and arginine 343. Glutamate 356 serves as a coordination point for Mg(2+). Residue arginine 358 coordinates L-glutamate. An O-AMP-tyrosine modification is found at tyrosine 396.

The protein belongs to the glutamine synthetase family. In terms of assembly, oligomer of 12 subunits arranged in the form of two hexameric ring. The cofactor is Mg(2+).

It localises to the cytoplasm. It catalyses the reaction L-glutamate + NH4(+) + ATP = L-glutamine + ADP + phosphate + H(+). The activity of this enzyme could be controlled by adenylation under conditions of abundant glutamine. Its function is as follows. Catalyzes the ATP-dependent biosynthesis of glutamine from glutamate and ammonia. This is Glutamine synthetase from Cereibacter sphaeroides (Rhodobacter sphaeroides).